The chain runs to 505 residues: Pup deamidase/depupylase (505 aa).

6–10 (GTEVE) lines the ATP pocket. Positions 8 and 93 each coordinate Mg(2+). Residue aspartate 95 is the Proton acceptor of the active site. Position 100 (glutamate 100) interacts with Mg(2+). An ATP-binding site is contributed by 102–103 (SA). Histidine 156 is a Mg(2+) binding site. 2 residues coordinate ATP: asparagine 158 and arginine 240. Histidine 242 contributes to the Mg(2+) binding site.

The protein belongs to the Pup ligase/Pup deamidase family. Pup deamidase subfamily. Interacts with the prokaryotic ubiquitin-like protein Pup. ATP serves as cofactor.

The catalysed reaction is [prokaryotic ubiquitin-like protein]-C-terminal-L-glutamine + H2O = [prokaryotic ubiquitin-like protein]-C-terminal-L-glutamate + NH4(+). Its pathway is protein degradation; proteasomal Pup-dependent pathway. Its function is as follows. Specifically catalyzes the deamidation of the C-terminal glutamine of the prokaryotic ubiquitin-like protein Pup to glutamate, thereby rendering Pup competent for conjugation. Also displays depupylase (DPUP) activity, removing conjugated Pup from target proteins; is thus involved in the recycling of Pup and may function similarly to deubiquitinases (DUBs) in eukaryotes to prevent or promote proteasomal degradation of certain proteins. The sequence is that of Pup deamidase/depupylase (dop) from Mycobacterium tuberculosis (strain CDC 1551 / Oshkosh).